Here is a 676-residue protein sequence, read N- to C-terminus: MTEFKVVHTICPYCGTGCGIDLVVKDGKVVDSHPFKRHPVNEGKVCIKGNYCYEFVHSEDRLTKPLIKKNGEFIEATWDEALDLIAGKLKQYSPDEVAFFSCARGTNEESYALQKFARTVLKTNNVDHCARIUHAPTVVGLGECFGSGAMTNSITDLAQADVLLIYGSNTFEAHPLIARSIVKAKENGTKIIAIDPRTTHTAKMADLHLKLIPGSNIDLINTITNIIIQEGMADEEFIKNRTEGYDELKDVVSKYTLEKTAELSGIPAETILEAARMYGSAENASIMYCLGVTEYTFGVDNVKSCCNLAMVTGNLGRPGTGVNPLRGQNNVQGACDMGALPNVFPGYQKVGEAYERLENLWETADLNREIGLTSPEVLHKAGEQVKFLHIVGEDPMVADADINHVEKALKSLDFFVVQDIFLTETAKLADVVLPAACWAEKDGTFTNSERRVQRIRKAVDAPGDALPDWLIVRKLAEKMGAGEKLNFESASEIFDEMAKVIPQYAGMSFERLGIDGLQWPCKTPEDPGTPILHKEKFLRPNGLGKFTPVEHKDADELIDEEYPLILTTGRIIFHYNSGTMTRRCDSITNEIDENFIEINTEDAKELGIKPGEKVRVSSRRGTVNADARVTENVIKGVVYMSFHFLEEATNKLTNSAYDPVSKTAELKICAVKVEKI.

One can recognise a 4Fe-4S Mo/W bis-MGD-type domain in the interval 4–60 (FKVVHTICPYCGTGCGIDLVVKDGKVVDSHPFKRHPVNEGKVCIKGNYCYEFVHSED). [4Fe-4S] cluster contacts are provided by Cys-11, Cys-14, Cys-18, and Cys-46. A non-standard amino acid (selenocysteine) is located at residue Sec-133.

The protein belongs to the prokaryotic molybdopterin-containing oxidoreductase family. In terms of assembly, dimer of an alpha (FdhA2) and a beta (FdhB2) subunit. [4Fe-4S] cluster is required as a cofactor. The cofactor is Mo-bis(molybdopterin guanine dinucleotide). Zn(2+) serves as cofactor.

It carries out the reaction oxidized coenzyme F420-(gamma-L-Glu)(n) + formate + 2 H(+) = reduced coenzyme F420-(gamma-L-Glu)(n) + CO2. In terms of biological role, catalyzes the oxidation of formate to carbon dioxide, with coenzyme F420 as the electron acceptor. In vitro can also use methyl viologen as electron acceptor. This Methanococcus maripaludis (strain DSM 14266 / JCM 13030 / NBRC 101832 / S2 / LL) protein is F420-dependent formate dehydrogenase 2 subunit alpha.